Consider the following 312-residue polypeptide: Methionyl-tRNA formyltransferase (312 aa).

Ser117–Pro120 is a binding site for (6S)-5,6,7,8-tetrahydrofolate.

The protein belongs to the Fmt family.

It catalyses the reaction L-methionyl-tRNA(fMet) + (6R)-10-formyltetrahydrofolate = N-formyl-L-methionyl-tRNA(fMet) + (6S)-5,6,7,8-tetrahydrofolate + H(+). Its function is as follows. Attaches a formyl group to the free amino group of methionyl-tRNA(fMet). The formyl group appears to play a dual role in the initiator identity of N-formylmethionyl-tRNA by promoting its recognition by IF2 and preventing the misappropriation of this tRNA by the elongation apparatus. The polypeptide is Methionyl-tRNA formyltransferase (Bordetella bronchiseptica (strain ATCC BAA-588 / NCTC 13252 / RB50) (Alcaligenes bronchisepticus)).